A 219-amino-acid chain; its full sequence is Cytochrome b6 (219 aa).

Residues 32–52 form a helical membrane-spanning segment; the sequence is IFYCFGGIVLTCFIIQAATGF. C35 is a heme c binding site. 2 residues coordinate heme b: H86 and H100. The next 3 membrane-spanning stretches (helical) occupy residues 90-110, 116-136, and 190-210; these read SGLM…TAGF, LTWI…VTGY, and AHTF…FLMI. Heme b-binding residues include H191 and H206.

Belongs to the cytochrome b family. PetB subfamily. The 4 large subunits of the cytochrome b6-f complex are cytochrome b6, subunit IV (17 kDa polypeptide, PetD), cytochrome f and the Rieske protein, while the 4 small subunits are PetG, PetL, PetM and PetN. The complex functions as a dimer. Heme b is required as a cofactor. The cofactor is heme c.

The protein resides in the plastid. It is found in the chloroplast thylakoid membrane. Its function is as follows. Component of the cytochrome b6-f complex, which mediates electron transfer between photosystem II (PSII) and photosystem I (PSI), cyclic electron flow around PSI, and state transitions. The polypeptide is Cytochrome b6 (Amphidinium operculatum (Dinoflagellate)).